A 132-amino-acid polypeptide reads, in one-letter code: UPF0299 membrane protein YohJ (132 aa).

Transmembrane regions (helical) follow at residues 7-27, 31-51, 63-83, and 93-113; these read IIWQ…AGIF, LLPV…VLLA, GCYV…VGVM, and FGPV…VVSW.

Belongs to the UPF0299 family.

The protein resides in the cell inner membrane. In Shigella boydii serotype 18 (strain CDC 3083-94 / BS512), this protein is UPF0299 membrane protein YohJ.